The following is a 334-amino-acid chain: Ornithine carbamoyltransferase (334 aa).

Carbamoyl phosphate contacts are provided by residues Ser56–Thr59, Gln83, Arg107, and His134–Gln137. L-ornithine contacts are provided by residues Asn168, Asp232, and Ser236–Met237. Residues Cys274 to Leu275 and Arg320 contribute to the carbamoyl phosphate site.

This sequence belongs to the aspartate/ornithine carbamoyltransferase superfamily. OTCase family.

The protein localises to the cytoplasm. The enzyme catalyses carbamoyl phosphate + L-ornithine = L-citrulline + phosphate + H(+). It functions in the pathway amino-acid biosynthesis; L-arginine biosynthesis; L-arginine from L-ornithine and carbamoyl phosphate: step 1/3. Functionally, reversibly catalyzes the transfer of the carbamoyl group from carbamoyl phosphate (CP) to the N(epsilon) atom of ornithine (ORN) to produce L-citrulline. This Shigella sonnei (strain Ss046) protein is Ornithine carbamoyltransferase.